The primary structure comprises 408 residues: Arylacetamide deacetylase-like 3 (408 aa).

Transmembrane regions (helical) follow at residues 2–22 (VVLALTLLVGSVAVFSLGSLL), 46–66 (ILSCLFHLTMTWGMIFEKLGL), and 109–129 (SSIPRLGIIFFHGGGTIIGSL). The Involved in the stabilization of the negatively charged intermediate by the formation of the oxyanion hole motif lies at 120-122 (HGG). Ser194 is a catalytic residue. Asn321 carries N-linked (GlcNAc...) asparagine glycosylation. Catalysis depends on residues Asp348 and His378.

It belongs to the 'GDXG' lipolytic enzyme family.

The protein resides in the membrane. In Mus musculus (Mouse), this protein is Arylacetamide deacetylase-like 3 (Aadacl3).